The following is a 130-amino-acid chain: Small ribosomal subunit protein uS11 (130 aa).

This sequence belongs to the universal ribosomal protein uS11 family. In terms of assembly, part of the 30S ribosomal subunit. Interacts with proteins S7 and S18. Binds to IF-3.

Its function is as follows. Located on the platform of the 30S subunit, it bridges several disparate RNA helices of the 16S rRNA. Forms part of the Shine-Dalgarno cleft in the 70S ribosome. In Phytoplasma mali (strain AT), this protein is Small ribosomal subunit protein uS11.